Here is a 100-residue protein sequence, read N- to C-terminus: MNQRQLMQMAQQMQRQMQKVQEELAATIVEGTAGGGAIVVKMNGHREVQSITISPEVVDPNDVDMLQDLLLVAINDASRKAQQLAEERMQPLTGGLKGLF.

This sequence belongs to the YbaB/EbfC family. In terms of assembly, homodimer.

Its subcellular location is the cytoplasm. It is found in the nucleoid. Functionally, binds to DNA and alters its conformation. May be involved in regulation of gene expression, nucleoid organization and DNA protection. The polypeptide is Nucleoid-associated protein Cagg_3200 (Chloroflexus aggregans (strain MD-66 / DSM 9485)).